Here is a 328-residue protein sequence, read N- to C-terminus: GTPase Obg (328 aa).

Residues 2 to 160 form the Obg domain; the sequence is YNFKDSVSIT…LNVRLELFLV (159 aa). The region spanning 161–326 is the OBG-type G domain; sequence ADIGLVGLPN…LIKEFFVLAK (166 aa). GTP contacts are provided by residues 167 to 174, 192 to 196, 213 to 216, 280 to 283, and 307 to 309; these read GLPNAGKS, FTTKI, DIPG, NKLD, and SIY. The Mg(2+) site is built by serine 174 and threonine 194.

The protein belongs to the TRAFAC class OBG-HflX-like GTPase superfamily. OBG GTPase family. Monomer. Requires Mg(2+) as cofactor.

Its subcellular location is the cytoplasm. Its function is as follows. An essential GTPase which binds GTP, GDP and possibly (p)ppGpp with moderate affinity, with high nucleotide exchange rates and a fairly low GTP hydrolysis rate. Plays a role in control of the cell cycle, stress response, ribosome biogenesis and in those bacteria that undergo differentiation, in morphogenesis control. The protein is GTPase Obg of Borreliella afzelii (strain PKo) (Borrelia afzelii).